Consider the following 414-residue polypeptide: S-adenosylmethionine synthase (414 aa).

Histidine 11 contributes to the ATP binding site. Aspartate 13 serves as a coordination point for Mg(2+). A K(+)-binding site is contributed by glutamate 39. 2 residues coordinate L-methionine: glutamate 52 and glutamine 95. The segment at 95–105 (QSPDIAQGVNL) is flexible loop. Residues 169–171 (DGK), 245–246 (KF), aspartate 254, 260–261 (RK), alanine 277, and lysine 281 contribute to the ATP site. Aspartate 254 lines the L-methionine pocket. L-methionine is bound at residue lysine 285.

This sequence belongs to the AdoMet synthase family. Homotetramer; dimer of dimers. It depends on Mg(2+) as a cofactor. K(+) is required as a cofactor.

It is found in the cytoplasm. The catalysed reaction is L-methionine + ATP + H2O = S-adenosyl-L-methionine + phosphate + diphosphate. The protein operates within amino-acid biosynthesis; S-adenosyl-L-methionine biosynthesis; S-adenosyl-L-methionine from L-methionine: step 1/1. Catalyzes the formation of S-adenosylmethionine (AdoMet) from methionine and ATP. The overall synthetic reaction is composed of two sequential steps, AdoMet formation and the subsequent tripolyphosphate hydrolysis which occurs prior to release of AdoMet from the enzyme. The chain is S-adenosylmethionine synthase from Synechococcus sp. (strain JA-3-3Ab) (Cyanobacteria bacterium Yellowstone A-Prime).